The primary structure comprises 118 residues: Small nuclear ribonucleoprotein Sm D2 (118 aa).

Positions methionine 1–valine 31 are disordered. Serine 2 carries the N-acetylserine modification. Residues lysine 6 and lysine 8 each participate in a glycyl lysine isopeptide (Lys-Gly) (interchain with G-Cter in SUMO2) cross-link. Over residues proline 7 to glutamate 21 the composition is skewed to basic and acidic residues. A Phosphoserine modification is found at serine 9. Phosphothreonine is present on threonine 12. One can recognise a Sm domain in the interval leucine 29–isoleucine 115.

This sequence belongs to the snRNP core protein family. As to quaternary structure, core component of the spliceosomal U1, U2, U4 and U5 small nuclear ribonucleoproteins (snRNPs), the building blocks of the spliceosome. Most spliceosomal snRNPs contain a common set of Sm proteins, SNRPB, SNRPD1, SNRPD2, SNRPD3, SNRPE, SNRPF and SNRPG that assemble in a heptameric protein ring on the Sm site of the small nuclear RNA to form the core snRNP. Component of the U1 snRNP. The U1 snRNP is composed of the U1 snRNA and the 7 core Sm proteins SNRPB, SNRPD1, SNRPD2, SNRPD3, SNRPE, SNRPF and SNRPG, and at least three U1 snRNP-specific proteins SNRNP70/U1-70K, SNRPA/U1-A and SNRPC/U1-C. Component of the U4/U6-U5 tri-snRNP complex composed of the U4, U6 and U5 snRNAs and at least PRPF3, PRPF4, PRPF6, PRPF8, PRPF31, SNRNP200, TXNL4A, SNRNP40, SNRPB, SNRPD1, SNRPD2, SNRPD3, SNRPE, SNRPF, SNRPG, DDX23, CD2BP2, PPIH, SNU13, EFTUD2, SART1 and USP39, plus LSM2, LSM3, LSM4, LSM5, LSM6, LSM7 and LSM8. Component of the minor spliceosome, which splices U12-type introns. Part of the SMN-Sm complex that contains SMN1, GEMIN2/SIP1, DDX20/GEMIN3, GEMIN4, GEMIN5, GEMIN6, GEMIN7, GEMIN8, STRAP/UNRIP and the Sm proteins SNRPB, SNRPD1, SNRPD2, SNRPD3, SNRPE, SNRPF and SNRPG; catalyzes core snRNPs assembly. Forms a 6S pICln-Sm complex composed of CLNS1A/pICln, SNRPD1, SNRPD2, SNRPE, SNRPF and SNRPG; ring-like structure where CLNS1A/pICln mimics additional Sm proteins and which is unable to assemble into the core snRNP. Interacts with SMN1; the interaction is direct. Interacts with GEMIN2; the interaction is direct. Interacts with SNRPD1; the interaction is direct. Interacts with SNRPF; the interaction is direct.

The protein resides in the cytoplasm. It is found in the cytosol. Its subcellular location is the nucleus. In terms of biological role, plays a role in pre-mRNA splicing as a core component of the spliceosomal U1, U2, U4 and U5 small nuclear ribonucleoproteins (snRNPs), the building blocks of the spliceosome. Component of both the pre-catalytic spliceosome B complex and activated spliceosome C complexes. As a component of the minor spliceosome, involved in the splicing of U12-type introns in pre-mRNAs. This is Small nuclear ribonucleoprotein Sm D2 (SNRPD2) from Homo sapiens (Human).